The chain runs to 54 residues: UPF0391 membrane protein Rmet_0093 (54 aa).

2 helical membrane passes run 5–25 (ALVF…GIAA) and 30–50 (IAKI…VMGL).

The protein belongs to the UPF0391 family.

The protein resides in the cell membrane. The protein is UPF0391 membrane protein Rmet_0093 of Cupriavidus metallidurans (strain ATCC 43123 / DSM 2839 / NBRC 102507 / CH34) (Ralstonia metallidurans).